We begin with the raw amino-acid sequence, 679 residues long: Transketolase (679 aa).

Substrate is bound at residue H30. Thiamine diphosphate-binding positions include H69 and 116–118; that span reads GPL. A Mg(2+)-binding site is contributed by D157. 2 residues coordinate thiamine diphosphate: G158 and N187. N187 and I189 together coordinate Mg(2+). Substrate-binding residues include H262, R358, and S385. Residue H262 participates in thiamine diphosphate binding. E417 and F444 together coordinate thiamine diphosphate. The Proton donor role is filled by E417. Substrate contacts are provided by H468, D476, and R527.

It belongs to the transketolase family. In terms of assembly, homodimer. It depends on Mg(2+) as a cofactor. Requires Ca(2+) as cofactor. The cofactor is Mn(2+). Co(2+) is required as a cofactor. Thiamine diphosphate serves as cofactor.

The catalysed reaction is D-sedoheptulose 7-phosphate + D-glyceraldehyde 3-phosphate = aldehydo-D-ribose 5-phosphate + D-xylulose 5-phosphate. Functionally, catalyzes the transfer of a two-carbon ketol group from a ketose donor to an aldose acceptor, via a covalent intermediate with the cofactor thiamine pyrophosphate. The sequence is that of Transketolase (TKL1) from Kluyveromyces lactis (strain ATCC 8585 / CBS 2359 / DSM 70799 / NBRC 1267 / NRRL Y-1140 / WM37) (Yeast).